Here is a 341-residue protein sequence, read N- to C-terminus: UDP-3-O-acylglucosamine N-acyltransferase (341 aa).

Residue histidine 239 is the Proton acceptor of the active site.

This sequence belongs to the transferase hexapeptide repeat family. LpxD subfamily. Homotrimer.

The catalysed reaction is a UDP-3-O-[(3R)-3-hydroxyacyl]-alpha-D-glucosamine + a (3R)-hydroxyacyl-[ACP] = a UDP-2-N,3-O-bis[(3R)-3-hydroxyacyl]-alpha-D-glucosamine + holo-[ACP] + H(+). It participates in bacterial outer membrane biogenesis; LPS lipid A biosynthesis. Functionally, catalyzes the N-acylation of UDP-3-O-acylglucosamine using 3-hydroxyacyl-ACP as the acyl donor. Is involved in the biosynthesis of lipid A, a phosphorylated glycolipid that anchors the lipopolysaccharide to the outer membrane of the cell. The protein is UDP-3-O-acylglucosamine N-acyltransferase of Idiomarina loihiensis (strain ATCC BAA-735 / DSM 15497 / L2-TR).